The sequence spans 512 residues: ATP synthase subunit alpha (512 aa).

169 to 176 (GDRQTGKT) lines the ATP pocket.

The protein belongs to the ATPase alpha/beta chains family. F-type ATPases have 2 components, CF(1) - the catalytic core - and CF(0) - the membrane proton channel. CF(1) has five subunits: alpha(3), beta(3), gamma(1), delta(1), epsilon(1). CF(0) has three main subunits: a(1), b(2) and c(9-12). The alpha and beta chains form an alternating ring which encloses part of the gamma chain. CF(1) is attached to CF(0) by a central stalk formed by the gamma and epsilon chains, while a peripheral stalk is formed by the delta and b chains.

The protein resides in the cell inner membrane. It carries out the reaction ATP + H2O + 4 H(+)(in) = ADP + phosphate + 5 H(+)(out). Functionally, produces ATP from ADP in the presence of a proton gradient across the membrane. The alpha chain is a regulatory subunit. The protein is ATP synthase subunit alpha of Orientia tsutsugamushi (strain Boryong) (Rickettsia tsutsugamushi).